Reading from the N-terminus, the 91-residue chain is Small ribosomal subunit protein uS19 (91 aa).

This sequence belongs to the universal ribosomal protein uS19 family.

Protein S19 forms a complex with S13 that binds strongly to the 16S ribosomal RNA. This Exiguobacterium sp. (strain ATCC BAA-1283 / AT1b) protein is Small ribosomal subunit protein uS19.